A 325-amino-acid polypeptide reads, in one-letter code: Phenylalanine--tRNA ligase alpha subunit (325 aa).

Glutamate 251 is a binding site for Mg(2+).

This sequence belongs to the class-II aminoacyl-tRNA synthetase family. Phe-tRNA synthetase alpha subunit type 1 subfamily. As to quaternary structure, tetramer of two alpha and two beta subunits. The cofactor is Mg(2+).

The protein localises to the cytoplasm. The enzyme catalyses tRNA(Phe) + L-phenylalanine + ATP = L-phenylalanyl-tRNA(Phe) + AMP + diphosphate + H(+). The protein is Phenylalanine--tRNA ligase alpha subunit of Thermotoga neapolitana (strain ATCC 49049 / DSM 4359 / NBRC 107923 / NS-E).